The primary structure comprises 412 residues: NADH-quinone oxidoreductase subunit D (412 aa).

It belongs to the complex I 49 kDa subunit family. NDH-1 is composed of 14 different subunits. Subunits NuoB, C, D, E, F, and G constitute the peripheral sector of the complex.

It localises to the cell inner membrane. It catalyses the reaction a quinone + NADH + 5 H(+)(in) = a quinol + NAD(+) + 4 H(+)(out). In terms of biological role, NDH-1 shuttles electrons from NADH, via FMN and iron-sulfur (Fe-S) centers, to quinones in the respiratory chain. The immediate electron acceptor for the enzyme in this species is believed to be a menaquinone. Couples the redox reaction to proton translocation (for every two electrons transferred, four hydrogen ions are translocated across the cytoplasmic membrane), and thus conserves the redox energy in a proton gradient. This is NADH-quinone oxidoreductase subunit D from Flavobacterium johnsoniae (strain ATCC 17061 / DSM 2064 / JCM 8514 / BCRC 14874 / CCUG 350202 / NBRC 14942 / NCIMB 11054 / UW101) (Cytophaga johnsonae).